The chain runs to 688 residues: Glycine--tRNA ligase beta subunit (688 aa).

This sequence belongs to the class-II aminoacyl-tRNA synthetase family. Tetramer of two alpha and two beta subunits.

The protein localises to the cytoplasm. It catalyses the reaction tRNA(Gly) + glycine + ATP = glycyl-tRNA(Gly) + AMP + diphosphate. This Shewanella sp. (strain MR-4) protein is Glycine--tRNA ligase beta subunit.